We begin with the raw amino-acid sequence, 526 residues long: Alpha-N-acetylgalactosaminide alpha-2,6-sialyltransferase 1 (526 aa).

Residues 1–12 (MTRYCRGLSQRQ) are Cytoplasmic-facing. Residues 13 to 33 (AFLLLTVLALLFILLFVVKDP) traverse the membrane as a helical; Signal-anchor for type II membrane protein segment. At 34–526 (RAKDSRCQFI…QRPQSDKAKN (493 aa)) the chain is on the lumenal side. The segment at 49 to 182 (SAQENQQKAE…TRRRQRLKAS (134 aa)) is disordered. The span at 81-106 (KDLKKQEREAVQGEQAEGKEKRKLET) shows a compositional bias: basic and acidic residues. The segment covering 161–171 (ATKSPASSPHP) has biased composition (polar residues). 5 N-linked (GlcNAc...) asparagine glycosylation sites follow: N206, N228, N259, N303, and N388. 2 disulfide bridges follow: C207-C290 and C293-C461.

The protein belongs to the glycosyltransferase 29 family. In terms of processing, glycosylated; autosialylated. Submaxillary gland, mammary gland, spleen and colon.

Its subcellular location is the golgi apparatus membrane. It catalyses the reaction a beta-D-galactosyl-(1-&gt;3)-N-acetyl-alpha-D-galactosaminyl derivative + CMP-N-acetyl-beta-neuraminate = a beta-D-galactosyl-(1-&gt;3)-[N-acetyl-alpha-neuraminyl-(2-&gt;6)]-N-acetyl-alpha-D-galactosaminyl derivative + CMP + H(+). The enzyme catalyses a 3-O-[N-acetyl-alpha-D-galactosaminyl]-L-seryl-[protein] + CMP-N-acetyl-beta-neuraminate = a 3-O-[N-acetyl-alpha-neuraminosyl-(2-&gt;6)-N-acetyl-alpha-D-galactosaminyl]-L-seryl-[protein] + CMP + H(+). It carries out the reaction a 3-O-[N-acetyl-alpha-D-galactosaminyl]-L-threonyl-[protein] + CMP-N-acetyl-beta-neuraminate = a 3-O-[N-acetyl-alpha-neuraminosyl-(2-&gt;6)-N-acetyl-alpha-D-galactosaminyl]-L-threonyl-[protein] + CMP + H(+). The catalysed reaction is a 3-O-[beta-D-galactosyl-(1-&gt;3)-N-acetyl-alpha-D-galactosaminyl]-L-seryl-[protein] + CMP-N-acetyl-beta-neuraminate = a 3-O-{beta-D-galactosyl-(1-&gt;3)-[N-acetyl-alpha-neuraminosyl-(2-&gt;6)]-N-acetyl-alpha-D-galactosaminyl}-L-seryl-[protein] + CMP + H(+). It catalyses the reaction a 3-O-[beta-D-galactosyl-(1-&gt;3)-N-acetyl-alpha-D-galactosaminyl]-L-threonyl-[protein] + CMP-N-acetyl-beta-neuraminate = a 3-O-{beta-D-galactosyl-(1-&gt;3)-[N-acetyl-alpha-neuraminosyl-(2-&gt;6)]-N-acetyl-alpha-D-galactosaminyl}-L-threonyl-[protein] + CMP + H(+). The enzyme catalyses a 3-O-[N-acetyl-alpha-neuraminyl-(2-&gt;3)-beta-D-galactosyl-(1-&gt;3)-N-acetyl-alpha-D-galactosaminyl]-L-threonyl-[protein] + CMP-N-acetyl-beta-neuraminate = a 3-O-{alpha-Neu5Ac-(2-&gt;3)-beta-D-Gal-(1-&gt;3)-[alpha-Neu5Ac-(2-&gt;6)]-alpha-D-GalNAc}-L-threonyl-[protein] + CMP + H(+). It functions in the pathway protein modification; protein glycosylation. Protein sialyltransferase specifically expressed in goblet cells that plays a key role in intestinal host-commensal homeostasis. Conjugates sialic acid with an alpha-2-6 linkage to N-acetylgalactosamine (GalNAc) glycan chains linked to serine or threonine in glycoproteins. Catalyzes the formation of the sialyl-Tn (S-Tn) antigen, an antigen found in intestinal goblet cells. Protein sialylation in globlet cells is essential for mucus integrity and is required to protect the intestinal mucus against excessive bacterial proteolytic degradation. The protein is Alpha-N-acetylgalactosaminide alpha-2,6-sialyltransferase 1 of Mus musculus (Mouse).